The following is an 85-amino-acid chain: uncharacterized protein (85 aa).

Ser22 bears the Phosphoserine mark.

Its subcellular location is the cytoplasm. The protein localises to the nucleus. This is an uncharacterized protein from Saccharomyces cerevisiae (strain ATCC 204508 / S288c) (Baker's yeast).